The primary structure comprises 327 residues: GMP reductase (327 aa).

The active-site Thioimidate intermediate is C175. 204–227 is an NADP(+) binding site; it reads IIADGGIRTHGDIAKSIRFGASMV.

Belongs to the IMPDH/GMPR family. GuaC type 2 subfamily.

The enzyme catalyses IMP + NH4(+) + NADP(+) = GMP + NADPH + 2 H(+). Catalyzes the irreversible NADPH-dependent deamination of GMP to IMP. It functions in the conversion of nucleobase, nucleoside and nucleotide derivatives of G to A nucleotides, and in maintaining the intracellular balance of A and G nucleotides. This is GMP reductase from Oceanobacillus iheyensis (strain DSM 14371 / CIP 107618 / JCM 11309 / KCTC 3954 / HTE831).